We begin with the raw amino-acid sequence, 340 residues long: Nod factor export ATP-binding protein I (340 aa).

Residues 1 to 24 (MLKRKLGPEDLRRLETPAIERESH) are compositionally biased toward basic and acidic residues. Positions 1–34 (MLKRKLGPEDLRRLETPAIERESHGQTSAKSSVP) are disordered. Residues 25–34 (GQTSAKSSVP) are compositionally biased toward polar residues. The ABC transporter domain maps to 42-272 (VDFAGVTKSY…HIGCQVMEIY (231 aa)). 74 to 81 (GPNGAGKS) provides a ligand contact to ATP.

Belongs to the ABC transporter superfamily. Lipooligosaccharide exporter (TC 3.A.1.102) family. The complex is composed of two ATP-binding proteins (NodI) and two transmembrane proteins (NodJ).

Its subcellular location is the cell inner membrane. Functionally, part of the ABC transporter complex NodIJ involved in the export of the nodulation factors (Nod factors), the bacterial signal molecules that induce symbiosis and subsequent nodulation induction. Nod factors are LCO (lipo-chitin oligosaccharide), a modified beta-1,4-linked N-acetylglucosamine oligosaccharide. This subunit is responsible for energy coupling to the transport system. The protein is Nod factor export ATP-binding protein I of Mesorhizobium japonicum (strain LMG 29417 / CECT 9101 / MAFF 303099) (Mesorhizobium loti (strain MAFF 303099)).